We begin with the raw amino-acid sequence, 361 residues long: 3-dehydroquinate synthase (361 aa).

Belongs to the archaeal-type DHQ synthase family.

The catalysed reaction is 2-amino-2,3,7-trideoxy-D-lyxo-hept-6-ulosonate + NAD(+) + H2O = 3-dehydroquinate + NH4(+) + NADH + H(+). Functionally, catalyzes the oxidative deamination and cyclization of 2-amino-3,7-dideoxy-D-threo-hept-6-ulosonic acid (ADH) to yield 3-dehydroquinate (DHQ), which is fed into the canonical shikimic pathway of aromatic amino acid biosynthesis. The protein is 3-dehydroquinate synthase (aroB') of Methanocaldococcus jannaschii (strain ATCC 43067 / DSM 2661 / JAL-1 / JCM 10045 / NBRC 100440) (Methanococcus jannaschii).